The following is a 189-amino-acid chain: MYLVVGLGNIGKEYKKTRHNIGFDVVDIIAEKYNIEINRQKFKGSYGEGRIGNEKIILLKPSTYMNLSGESVIEAANFYKIDKENIIVIYDDMSIDIGKLRVRSKGSAGGHNGIKNIIQHLNSDIFPRVRVGIGQPDENVVNYVLGKFSKDEREIIEKVLAMSAKACISIVEDGVTEAMNKYNGVKIEV.

Tyrosine 14 contacts tRNA. The active-site Proton acceptor is histidine 19. TRNA-binding residues include tyrosine 64, asparagine 66, and asparagine 112.

This sequence belongs to the PTH family. Monomer.

It is found in the cytoplasm. It catalyses the reaction an N-acyl-L-alpha-aminoacyl-tRNA + H2O = an N-acyl-L-amino acid + a tRNA + H(+). Its function is as follows. Hydrolyzes ribosome-free peptidyl-tRNAs (with 1 or more amino acids incorporated), which drop off the ribosome during protein synthesis, or as a result of ribosome stalling. Functionally, catalyzes the release of premature peptidyl moieties from peptidyl-tRNA molecules trapped in stalled 50S ribosomal subunits, and thus maintains levels of free tRNAs and 50S ribosomes. The chain is Peptidyl-tRNA hydrolase from Clostridium botulinum (strain ATCC 19397 / Type A).